We begin with the raw amino-acid sequence, 1221 residues long: Deubiquitinating protein VCPIP1 (1221 aa).

The segment covering 1 to 19 (MSQPPPPPPLPPPPPPPEA) has biased composition (pro residues). Residues 1–40 (MSQPPPPPPLPPPPPPPEAPQTSSSLAAAATPGGLSKRRD) form a disordered region. Positions 207–360 (LIPVHVDGDG…RNHYIPLVGI (154 aa)) constitute an OTU domain. Aspartate 215 is a catalytic residue. Catalysis depends on cysteine 218, which acts as the Nucleophile. Histidine 353 is a catalytic residue. Lysine 407 is modified (N6-acetyllysine). Disordered stretches follow at residues 724–778 (SVMQ…KIRI) and 988–1009 (EATT…GSGG). Phosphoserine occurs at positions 746 and 756. A compositionally biased stretch (low complexity) spans 754 to 770 (PSSAPATPTKAPYSPTT). Threonine 762 is modified (phosphothreonine). 4 positions are modified to phosphoserine: serine 767, serine 993, serine 997, and serine 1076. Disordered stretches follow at residues 1117–1177 (ASMD…TDSR) and 1189–1221 (RSKA…MDHS). Residues 1143 to 1156 (VSSSVRPGNLQTGL) are compositionally biased toward polar residues. Low complexity predominate over residues 1162 to 1173 (LTGGTENLNTET). Phosphoserine occurs at positions 1197 and 1206. The segment covering 1198–1208 (MEEPEEMDSQD) has biased composition (acidic residues). The span at 1209–1221 (AETTNTTEPMDHS) shows a compositional bias: polar residues.

In terms of assembly, binds VCP and the ternary complex containing STX5A, NSFL1C and VCP. In terms of processing, phosphorylated at Ser-1206 by ATM or ATR following induction of covalent DNA-protein cross-links (DPCs). In terms of tissue distribution, widely expressed.

The protein localises to the nucleus. Its subcellular location is the cytoplasm. It localises to the endoplasmic reticulum. The protein resides in the golgi apparatus. It is found in the golgi stack. The catalysed reaction is Thiol-dependent hydrolysis of ester, thioester, amide, peptide and isopeptide bonds formed by the C-terminal Gly of ubiquitin (a 76-residue protein attached to proteins as an intracellular targeting signal).. Functionally, deubiquitinating enzyme involved in DNA repair and reassembly of the Golgi apparatus and the endoplasmic reticulum following mitosis. Necessary for VCP-mediated reassembly of Golgi stacks after mitosis. Plays a role in VCP-mediated formation of transitional endoplasmic reticulum (tER). Mediates dissociation of the ternary complex containing STX5A, NSFL1C and VCP. Also involved in DNA repair following phosphorylation by ATM or ATR: acts by catalyzing deubiquitination of SPRTN, thereby promoting SPRTN recruitment to chromatin and subsequent proteolytic cleavage of covalent DNA-protein cross-links (DPCs). Hydrolyzes 'Lys-11'- and 'Lys-48'-linked polyubiquitin chains. The sequence is that of Deubiquitinating protein VCPIP1 from Rattus norvegicus (Rat).